The sequence spans 95 residues: Aspartyl/glutamyl-tRNA(Asn/Gln) amidotransferase subunit C (95 aa).

The protein belongs to the GatC family. In terms of assembly, heterotrimer of A, B and C subunits.

It carries out the reaction L-glutamyl-tRNA(Gln) + L-glutamine + ATP + H2O = L-glutaminyl-tRNA(Gln) + L-glutamate + ADP + phosphate + H(+). The catalysed reaction is L-aspartyl-tRNA(Asn) + L-glutamine + ATP + H2O = L-asparaginyl-tRNA(Asn) + L-glutamate + ADP + phosphate + 2 H(+). Functionally, allows the formation of correctly charged Asn-tRNA(Asn) or Gln-tRNA(Gln) through the transamidation of misacylated Asp-tRNA(Asn) or Glu-tRNA(Gln) in organisms which lack either or both of asparaginyl-tRNA or glutaminyl-tRNA synthetases. The reaction takes place in the presence of glutamine and ATP through an activated phospho-Asp-tRNA(Asn) or phospho-Glu-tRNA(Gln). The protein is Aspartyl/glutamyl-tRNA(Asn/Gln) amidotransferase subunit C of Methylocella silvestris (strain DSM 15510 / CIP 108128 / LMG 27833 / NCIMB 13906 / BL2).